A 221-amino-acid chain; its full sequence is Lipoprotein-releasing system ATP-binding protein LolD (221 aa).

The 215-residue stretch at 6-220 (LTLKNVSKHY…YKLKHGALNM (215 aa)) folds into the ABC transporter domain. 42–49 (GSSGSGKS) serves as a coordination point for ATP.

This sequence belongs to the ABC transporter superfamily. Lipoprotein translocase (TC 3.A.1.125) family. In terms of assembly, the complex is composed of two ATP-binding proteins (LolD) and two transmembrane proteins (LolC and LolE).

It is found in the cell inner membrane. Its function is as follows. Part of the ABC transporter complex LolCDE involved in the translocation of mature outer membrane-directed lipoproteins, from the inner membrane to the periplasmic chaperone, LolA. Responsible for the formation of the LolA-lipoprotein complex in an ATP-dependent manner. This Rickettsia bellii (strain RML369-C) protein is Lipoprotein-releasing system ATP-binding protein LolD.